The sequence spans 221 residues: Probable transaldolase (221 aa).

The active-site Schiff-base intermediate with substrate is the Lys83.

Belongs to the transaldolase family. Type 3B subfamily.

The protein localises to the cytoplasm. The catalysed reaction is D-sedoheptulose 7-phosphate + D-glyceraldehyde 3-phosphate = D-erythrose 4-phosphate + beta-D-fructose 6-phosphate. It participates in carbohydrate degradation; pentose phosphate pathway; D-glyceraldehyde 3-phosphate and beta-D-fructose 6-phosphate from D-ribose 5-phosphate and D-xylulose 5-phosphate (non-oxidative stage): step 2/3. Transaldolase is important for the balance of metabolites in the pentose-phosphate pathway. The chain is Probable transaldolase from Petrotoga mobilis (strain DSM 10674 / SJ95).